The sequence spans 60 residues: Large ribosomal subunit protein uL30 (60 aa).

It belongs to the universal ribosomal protein uL30 family. In terms of assembly, part of the 50S ribosomal subunit.

The chain is Large ribosomal subunit protein uL30 from Thermus thermophilus (strain ATCC BAA-163 / DSM 7039 / HB27).